A 765-amino-acid chain; its full sequence is E3 ubiquitin-protein ligase SlrP (765 aa).

The tract at residues 1–453 (MFNITNIQST…YQGPRVLFAM (453 aa)) is interaction with target proteins. LRR repeat units follow at residues 200–219 (QITTLILDNNELKSLPENLQ), 221–242 (NIKTLYANSNQLTSIPATLPDT), 243–262 (IQEMELSINRITELPERLPS), 263–284 (ALQSLDLFHNKISCLPENLPEE), 285–305 (LRYLSVYDNSIRTLPAHLPSE), 306–325 (ITHLNVQSNSLTALPETLPP), 326–346 (GLKTLEAGENALTSLPASLPP), 347–368 (ELQVLDVSKNQITVLPETLPPT), 369–389 (ITTLDVSRNALTNLPENLPAA), and 390–410 (LQIMQASRNNLVRLPESLPHF). The interval 454–461 (GDFSIVRV) is linker. The tract at residues 462–765 (TRPLHQAVQG…VSSLMSAYWR (304 aa)) is E3 ubiquitin-protein ligase catalytic domain. An NEL domain is found at 464 to 758 (PLHQAVQGWL…NILLKKEVSS (295 aa)). The active-site Glycyl thioester intermediate is Cys546.

Belongs to the LRR-containing bacterial E3 ligase family. In terms of assembly, interacts with host TXN. In terms of processing, ubiquitinated in the presence of host E1 ubiquitin-activating enzyme, E2 ubiquitin-conjugating enzyme and ubiquitin.

The protein resides in the secreted. Its subcellular location is the host cytoplasm. The catalysed reaction is S-ubiquitinyl-[E2 ubiquitin-conjugating enzyme]-L-cysteine + [acceptor protein]-L-lysine = [E2 ubiquitin-conjugating enzyme]-L-cysteine + N(6)-ubiquitinyl-[acceptor protein]-L-lysine.. Effector proteins function to alter host cell physiology and promote bacterial survival in host tissues. This protein is an E3 ubiquitin ligase that interferes with host's ubiquitination pathway. Can ubiquitinate both ubiquitin and host TXN (thioredoxin). Leads to significant decrease of thioredoxin activity and increase of host cell death. The protein is E3 ubiquitin-protein ligase SlrP (slrP) of Salmonella typhimurium (strain 14028s / SGSC 2262).